Consider the following 212-residue polypeptide: Translation initiation factor IF-3 (212 aa).

Residues 190–203 (LVDKNSDSQDKSVS) are compositionally biased toward basic and acidic residues. A disordered region spans residues 190-212 (LVDKNSDSQDKSVSEEDTNEGEQ).

The protein belongs to the IF-3 family. In terms of assembly, monomer.

It is found in the cytoplasm. In terms of biological role, IF-3 binds to the 30S ribosomal subunit and shifts the equilibrium between 70S ribosomes and their 50S and 30S subunits in favor of the free subunits, thus enhancing the availability of 30S subunits on which protein synthesis initiation begins. The protein is Translation initiation factor IF-3 of Mycoplasmopsis fermentans (Mycoplasma fermentans).